The sequence spans 341 residues: Phosphate acyltransferase (341 aa).

The protein belongs to the PlsX family. In terms of assembly, homodimer. Probably interacts with PlsY.

Its subcellular location is the cytoplasm. The catalysed reaction is a fatty acyl-[ACP] + phosphate = an acyl phosphate + holo-[ACP]. It functions in the pathway lipid metabolism; phospholipid metabolism. In terms of biological role, catalyzes the reversible formation of acyl-phosphate (acyl-PO(4)) from acyl-[acyl-carrier-protein] (acyl-ACP). This enzyme utilizes acyl-ACP as fatty acyl donor, but not acyl-CoA. The protein is Phosphate acyltransferase of Saccharophagus degradans (strain 2-40 / ATCC 43961 / DSM 17024).